Here is a 443-residue protein sequence, read N- to C-terminus: Exodeoxyribonuclease 7 large subunit (443 aa).

Belongs to the XseA family. Heterooligomer composed of large and small subunits.

The protein localises to the cytoplasm. It carries out the reaction Exonucleolytic cleavage in either 5'- to 3'- or 3'- to 5'-direction to yield nucleoside 5'-phosphates.. Bidirectionally degrades single-stranded DNA into large acid-insoluble oligonucleotides, which are then degraded further into small acid-soluble oligonucleotides. The sequence is that of Exodeoxyribonuclease 7 large subunit from Vibrio vulnificus (strain CMCP6).